Consider the following 847-residue polypeptide: Alpha-glucuronidase A (847 aa).

The signal sequence occupies residues 1-22 (MRSFLLLTALLGVAAVAEDGLA). N-linked (GlcNAc...) asparagine glycosylation is found at Asn48, Asn78, Asn227, Asn315, Asn349, Asn457, Asn472, Asn534, Asn583, Asn689, Asn738, Asn739, and Asn769.

Belongs to the glycosyl hydrolase 67 family.

The protein resides in the secreted. The catalysed reaction is an alpha-D-glucuronoside + H2O = D-glucuronate + an alcohol. In terms of biological role, alpha-glucuronidase involved in the hydrolysis of xylan, a major structural heterogeneous polysaccharide found in plant biomass representing the second most abundant polysaccharide in the biosphere, after cellulose. Releases 4-O-methylglucuronic acid from xylan. This Emericella nidulans (strain FGSC A4 / ATCC 38163 / CBS 112.46 / NRRL 194 / M139) (Aspergillus nidulans) protein is Alpha-glucuronidase A (aguA).